The sequence spans 571 residues: Protein dead ringer homolog (571 aa).

Disordered stretches follow at residues 45–117 (QHQQ…EPDK) and 190–229 (KRMQ…SCNG). Residues 49–77 (RMMEQHKNDDVISNDVRCDDFSDGGERQR) show a composition bias toward basic and acidic residues. Residues 195-206 (DHNIQQSTNHIP) are compositionally biased toward polar residues. The span at 207–224 (TPSSASSHTSSGSVTSQT) shows a compositional bias: low complexity. The region spanning 249 to 341 (DIKRKEFLDD…YLYPFECERE (93 aa)) is the ARID domain. The span at 459 to 471 (AAHHAAQQAAQHQ) shows a compositional bias: low complexity. The interval 459 to 528 (AAHHAAQQAA…GDRGRHNEMS (70 aa)) is disordered. Positions 473–558 (SLKKEIDSDY…GVLFAHSPNH (86 aa)) constitute an REKLES domain. Basic and acidic residues-rich tracts occupy residues 487 to 507 (PPEK…DNQR) and 518 to 527 (MGDRGRHNEM).

It localises to the nucleus. Its function is as follows. Transcription factor. This is Protein dead ringer homolog (Ci-DRIL1/2) from Ciona intestinalis (Transparent sea squirt).